The sequence spans 258 residues: Large ribosomal subunit protein uL5c (258 aa).

The transit peptide at 1–38 (MASTSLLQSTSSSFAGVRFHCRTSAAPRVGLSSFTVKA) directs the protein to the chloroplast.

Component of the chloroplast large ribosomal subunit (LSU). Mature 70S chloroplast ribosomes of higher plants consist of a small (30S) and a large (50S) subunit. The 30S small subunit contains 1 molecule of ribosomal RNA (16S rRNA) and 24 different proteins. The 50S large subunit contains 3 rRNA molecules (23S, 5S and 4.5S rRNA) and 33 different proteins.

The protein localises to the plastid. Its subcellular location is the chloroplast. Component of the chloroplast ribosome (chloro-ribosome), a dedicated translation machinery responsible for the synthesis of chloroplast genome-encoded proteins, including proteins of the transcription and translation machinery and components of the photosynthetic apparatus. The sequence is that of Large ribosomal subunit protein uL5c (RPL5) from Spinacia oleracea (Spinach).